The primary structure comprises 96 residues: Aspartyl/glutamyl-tRNA(Asn/Gln) amidotransferase subunit C (96 aa).

This sequence belongs to the GatC family. Heterotrimer of A, B and C subunits.

It catalyses the reaction L-glutamyl-tRNA(Gln) + L-glutamine + ATP + H2O = L-glutaminyl-tRNA(Gln) + L-glutamate + ADP + phosphate + H(+). The catalysed reaction is L-aspartyl-tRNA(Asn) + L-glutamine + ATP + H2O = L-asparaginyl-tRNA(Asn) + L-glutamate + ADP + phosphate + 2 H(+). In terms of biological role, allows the formation of correctly charged Asn-tRNA(Asn) or Gln-tRNA(Gln) through the transamidation of misacylated Asp-tRNA(Asn) or Glu-tRNA(Gln) in organisms which lack either or both of asparaginyl-tRNA or glutaminyl-tRNA synthetases. The reaction takes place in the presence of glutamine and ATP through an activated phospho-Asp-tRNA(Asn) or phospho-Glu-tRNA(Gln). This Geobacillus kaustophilus (strain HTA426) protein is Aspartyl/glutamyl-tRNA(Asn/Gln) amidotransferase subunit C.